We begin with the raw amino-acid sequence, 366 residues long: Carbamoyl phosphate synthase small chain (366 aa).

The tract at residues 1–171 (MLEKRYLVLE…KTPYVSTGSD (171 aa)) is CPSase. Residues Ser-47, Gly-221, and Gly-223 each contribute to the L-glutamine site. The region spanning 173 to 360 (SVVLLDFGKK…IAMMKDFKEK (188 aa)) is the Glutamine amidotransferase type-1 domain. The active-site Nucleophile is the Cys-248. Leu-249, Gln-252, Asn-290, Gly-292, and Tyr-293 together coordinate L-glutamine. Active-site residues include His-333 and Glu-335.

This sequence belongs to the CarA family. Composed of two chains; the small (or glutamine) chain promotes the hydrolysis of glutamine to ammonia, which is used by the large (or ammonia) chain to synthesize carbamoyl phosphate. Tetramer of heterodimers (alpha,beta)4.

It carries out the reaction hydrogencarbonate + L-glutamine + 2 ATP + H2O = carbamoyl phosphate + L-glutamate + 2 ADP + phosphate + 2 H(+). It catalyses the reaction L-glutamine + H2O = L-glutamate + NH4(+). It functions in the pathway amino-acid biosynthesis; L-arginine biosynthesis; carbamoyl phosphate from bicarbonate: step 1/1. It participates in pyrimidine metabolism; UMP biosynthesis via de novo pathway; (S)-dihydroorotate from bicarbonate: step 1/3. Its function is as follows. Small subunit of the glutamine-dependent carbamoyl phosphate synthetase (CPSase). CPSase catalyzes the formation of carbamoyl phosphate from the ammonia moiety of glutamine, carbonate, and phosphate donated by ATP, constituting the first step of 2 biosynthetic pathways, one leading to arginine and/or urea and the other to pyrimidine nucleotides. The small subunit (glutamine amidotransferase) binds and cleaves glutamine to supply the large subunit with the substrate ammonia. This chain is Carbamoyl phosphate synthase small chain, found in Staphylococcus epidermidis (strain ATCC 12228 / FDA PCI 1200).